Here is a 585-residue protein sequence, read N- to C-terminus: Chaperonin CPN60-like 1, mitochondrial (585 aa).

The N-terminal 32 residues, 1–32, are a transit peptide targeting the mitochondrion; the sequence is MYRLVSNVASKARIARKCTSQIGSRLNSTRNY.

The protein belongs to the chaperonin (HSP60) family.

The protein localises to the mitochondrion. Its function is as follows. Implicated in mitochondrial protein import and macromolecular assembly. May facilitate the correct folding of imported proteins. May also prevent misfolding and promote the refolding and proper assembly of unfolded polypeptides generated under stress conditions in the mitochondrial matrix. The protein is Chaperonin CPN60-like 1, mitochondrial of Arabidopsis thaliana (Mouse-ear cress).